The primary structure comprises 128 residues: MSNIPAELRFAESHEWARLEADGTVTVGISDHAQEALGDVVFVELPEIGKVFAAGDVAGVVESVKAASDIYSPVAGEVVEVNEALGDSPESLNSEPYSAWIFKVKPASAEADLAKLLDAAGYKGAIGE.

One can recognise a Lipoyl-binding domain in the interval 24–105; sequence TVTVGISDHA…PYSAWIFKVK (82 aa). The residue at position 65 (Lys-65) is an N6-lipoyllysine.

This sequence belongs to the GcvH family. The glycine cleavage system is composed of four proteins: P, T, L and H. The cofactor is (R)-lipoate.

Its function is as follows. The glycine cleavage system catalyzes the degradation of glycine. The H protein shuttles the methylamine group of glycine from the P protein to the T protein. This Pseudomonas syringae pv. tomato (strain ATCC BAA-871 / DC3000) protein is Glycine cleavage system H protein 2.